The sequence spans 239 residues: Flagellin B3 (239 aa).

Positions 1 to 11 (MLKNFMKNKKG) are excised as a propeptide. N-linked (GlcNAc...) asparagine glycosylation is found at asparagine 115 and asparagine 128.

Belongs to the archaeal flagellin family. In terms of processing, N-linked glycans consist of the 779 Da trisaccharide beta-ManNAc(Thr)-(1-4)-beta-GlcNAc3NAcA-(1-3)-beta-GlcNAc.

It is found in the archaeal flagellum. Its function is as follows. Flagellin is the subunit protein which polymerizes to form the filaments of archaeal flagella. This is Flagellin B3 (flaB3) from Methanococcus voltae.